Consider the following 76-residue polypeptide: Large ribosomal subunit protein eL20 (76 aa).

This sequence belongs to the eukaryotic ribosomal protein eL20 family. As to quaternary structure, part of the 50S ribosomal subunit. Binds 23S rRNA.

This Methanococcus maripaludis (strain C5 / ATCC BAA-1333) protein is Large ribosomal subunit protein eL20.